Here is a 330-residue protein sequence, read N- to C-terminus: Protein RecA (330 aa).

66 to 73 lines the ATP pocket; the sequence is GPESSGKT.

It belongs to the RecA family.

The protein resides in the cytoplasm. Functionally, can catalyze the hydrolysis of ATP in the presence of single-stranded DNA, the ATP-dependent uptake of single-stranded DNA by duplex DNA, and the ATP-dependent hybridization of homologous single-stranded DNAs. It interacts with LexA causing its activation and leading to its autocatalytic cleavage. This chain is Protein RecA, found in Bacteroides thetaiotaomicron (strain ATCC 29148 / DSM 2079 / JCM 5827 / CCUG 10774 / NCTC 10582 / VPI-5482 / E50).